Here is a 278-residue protein sequence, read N- to C-terminus: Inosose isomerase (278 aa).

A divalent metal cation contacts are provided by Glu142, Asp174, His200, and Glu246.

It belongs to the IolI family. The cofactor is a divalent metal cation.

The enzyme catalyses scyllo-inosose = scyllo-inosine. It participates in polyol metabolism; myo-inositol degradation into acetyl-CoA. Its function is as follows. Involved in the reversible interconverion of 2-keto-myo-inositol (2KMI, inosose or 2,4,6/3,5-pentahydroxycyclohexanone) to 1-keto-D-chiro-inositol (1KDCI or 2,3,5/4,6-pentahydroxycyclohexanone). The protein is Inosose isomerase (iolI) of Bacillus licheniformis (strain ATCC 14580 / DSM 13 / JCM 2505 / CCUG 7422 / NBRC 12200 / NCIMB 9375 / NCTC 10341 / NRRL NRS-1264 / Gibson 46).